A 295-amino-acid polypeptide reads, in one-letter code: Microcin B17-processing protein McbB (295 aa).

Its subcellular location is the cytoplasm. In terms of biological role, necessary to process the inactive microcin B17 (McbA) precursor into the active peptide. The sequence is that of Microcin B17-processing protein McbB (mcbB) from Escherichia coli.